Here is a 286-residue protein sequence, read N- to C-terminus: Bifunctional protein FolD (286 aa).

Residues 166–168 (GAS) and isoleucine 232 contribute to the NADP(+) site.

The protein belongs to the tetrahydrofolate dehydrogenase/cyclohydrolase family. In terms of assembly, homodimer.

The enzyme catalyses (6R)-5,10-methylene-5,6,7,8-tetrahydrofolate + NADP(+) = (6R)-5,10-methenyltetrahydrofolate + NADPH. The catalysed reaction is (6R)-5,10-methenyltetrahydrofolate + H2O = (6R)-10-formyltetrahydrofolate + H(+). It participates in one-carbon metabolism; tetrahydrofolate interconversion. Functionally, catalyzes the oxidation of 5,10-methylenetetrahydrofolate to 5,10-methenyltetrahydrofolate and then the hydrolysis of 5,10-methenyltetrahydrofolate to 10-formyltetrahydrofolate. The sequence is that of Bifunctional protein FolD from Vibrio campbellii (strain ATCC BAA-1116).